A 354-amino-acid polypeptide reads, in one-letter code: MELKTSYASDNYPIIVKHHAINSLERYIKNEEQRFFIIDKQVYNLFVDKLEALAQKFDAKCIVIPSGETSKSFEHYHRTIEYLLSHQLTRQTCIVAIGGGATGDFAGFIAATLLRGVSFVQVPTTILAHDSSVGGKVGINSEHGKNLIGAFYRPKAVIYDLDFLETLPYSEILSGYAEVYKHALLNGEKSTKNIESNFTSNKVLQALKNLDYYLFEGIKTKLNIVVEDEKEKGKRKFLNLGHTFGHAIEYEHKIPHGHAVMIGILYQFIVANHLFETNYNIQHYINYMKKLKYPLSIIKQLHFEDTYHFMLLDKKNDYNGIQMVLLKNLGKPVVTHVDKDTLLSAFEELQSYFK.

NAD(+) contacts are provided by residues 66–71 (SGETSK), 100–104 (GATGD), 124–125 (TT), K136, K145, and 163–166 (FLET). E178, H242, and H256 together coordinate Zn(2+).

The protein belongs to the sugar phosphate cyclases superfamily. Dehydroquinate synthase family. NAD(+) serves as cofactor. Co(2+) is required as a cofactor. It depends on Zn(2+) as a cofactor.

Its subcellular location is the cytoplasm. The enzyme catalyses 7-phospho-2-dehydro-3-deoxy-D-arabino-heptonate = 3-dehydroquinate + phosphate. Its pathway is metabolic intermediate biosynthesis; chorismate biosynthesis; chorismate from D-erythrose 4-phosphate and phosphoenolpyruvate: step 2/7. Functionally, catalyzes the conversion of 3-deoxy-D-arabino-heptulosonate 7-phosphate (DAHP) to dehydroquinate (DHQ). The protein is 3-dehydroquinate synthase of Staphylococcus epidermidis (strain ATCC 35984 / DSM 28319 / BCRC 17069 / CCUG 31568 / BM 3577 / RP62A).